The primary structure comprises 199 residues: Dephospho-CoA kinase (199 aa).

Positions 2–199 constitute a DPCK domain; sequence KIAVTGGYSS…FVADRIEKKK (198 aa). Residue 10 to 15 coordinates ATP; sequence SSGKSS.

This sequence belongs to the CoaE family.

The protein localises to the cytoplasm. The enzyme catalyses 3'-dephospho-CoA + ATP = ADP + CoA + H(+). It participates in cofactor biosynthesis; coenzyme A biosynthesis; CoA from (R)-pantothenate: step 5/5. Functionally, catalyzes the phosphorylation of the 3'-hydroxyl group of dephosphocoenzyme A to form coenzyme A. This Desulfotalea psychrophila (strain LSv54 / DSM 12343) protein is Dephospho-CoA kinase.